Here is a 412-residue protein sequence, read N- to C-terminus: Argininosuccinate synthase (412 aa).

ATP is bound at residue A8 to S16. Y87 contributes to the L-citrulline binding site. G117 is an ATP binding site. L-aspartate contacts are provided by T119, N123, and D124. N123 is a binding site for L-citrulline. 4 residues coordinate L-citrulline: R127, S175, E259, and Y271.

The protein belongs to the argininosuccinate synthase family. Type 1 subfamily. As to quaternary structure, homotetramer.

It localises to the cytoplasm. It catalyses the reaction L-citrulline + L-aspartate + ATP = 2-(N(omega)-L-arginino)succinate + AMP + diphosphate + H(+). Its pathway is amino-acid biosynthesis; L-arginine biosynthesis; L-arginine from L-ornithine and carbamoyl phosphate: step 2/3. This is Argininosuccinate synthase from Clavibacter michiganensis subsp. michiganensis (strain NCPPB 382).